Reading from the N-terminus, the 770-residue chain is Low-density lipoprotein receptor-related protein 3 (770 aa).

A signal peptide spans 1 to 36 (MEKRAAAGPEGAPGARAPLAVVCLVNLFLTGRLSSA). Residues 37–496 (VPALAACSGK…HGCLAAVPRK (460 aa)) are Extracellular-facing. 9 disulfide bridges follow: cysteine 43/cysteine 72, cysteine 99/cysteine 120, cysteine 166/cysteine 178, cysteine 173/cysteine 191, cysteine 185/cysteine 200, cysteine 212/cysteine 227, cysteine 219/cysteine 240, cysteine 234/cysteine 249, and cysteine 254/cysteine 282. The 117-residue stretch at 43-159 (CSGKLEQHTE…QGFRLSYIRG (117 aa)) folds into the CUB 1 domain. A glycan (N-linked (GlcNAc...) asparagine) is linked at asparagine 71. LDL-receptor class A domains follow at residues 165-201 (SCQT…GNCS) and 211-250 (LCPG…AGCP). A glycan (N-linked (GlcNAc...) asparagine) is linked at asparagine 199. A CUB 2 domain is found at 254–365 (CGRRLGSFYG…HGFNATYQVK (112 aa)). N-linked (GlcNAc...) asparagine glycosylation occurs at asparagine 359. LDL-receptor class A domains are found at residues 415-453 (ACPP…KNCF) and 454-490 (SCQP…HGCL). Cystine bridges form between cysteine 416–cysteine 430, cysteine 423–cysteine 443, cysteine 437–cysteine 452, cysteine 455–cysteine 467, cysteine 462–cysteine 480, and cysteine 474–cysteine 489. The chain crosses the membrane as a helical span at residues 497 to 517 (VITAALIGSLVCGLLLVIALG). Over 518 to 770 (CAFKLYSLRT…ASDDEALLVC (253 aa)) the chain is Cytoplasmic. A disordered region spans residues 639–753 (LLQAAPGPVP…PLGVCRSPPP (115 aa)). The span at 689–703 (RDPEYRPEDKERKAC) shows a compositional bias: basic and acidic residues.

Belongs to the LDLR family. In terms of assembly, binds GGA1 and GGA2.

It localises to the membrane. The protein localises to the coated pit. In terms of biological role, probable receptor, which may be involved in the internalization of lipophilic molecules and/or signal transduction. Its precise role is however unclear, since it does not bind to very low density lipoprotein (VLDL) or to LRPAP1 in vitro. This chain is Low-density lipoprotein receptor-related protein 3 (Lrp3), found in Rattus norvegicus (Rat).